Reading from the N-terminus, the 344-residue chain is Uroporphyrinogen decarboxylase (344 aa).

Residues 23–27 (RQAGR), Asp73, Tyr149, Thr204, and His321 each bind substrate.

The protein belongs to the uroporphyrinogen decarboxylase family. As to quaternary structure, homodimer.

It is found in the cytoplasm. The catalysed reaction is uroporphyrinogen III + 4 H(+) = coproporphyrinogen III + 4 CO2. Its pathway is porphyrin-containing compound metabolism; protoporphyrin-IX biosynthesis; coproporphyrinogen-III from 5-aminolevulinate: step 4/4. Catalyzes the decarboxylation of four acetate groups of uroporphyrinogen-III to yield coproporphyrinogen-III. The polypeptide is Uroporphyrinogen decarboxylase (Francisella tularensis subsp. tularensis (strain FSC 198)).